The chain runs to 171 residues: Photosystem I assembly protein Ycf3 (171 aa).

TPR repeat units lie at residues 35 to 68 (AFTY…EVDA), 72 to 105 (SYIL…NPYL), and 120 to 153 (GEQA…APTN).

This sequence belongs to the Ycf3 family.

The protein resides in the plastid. It localises to the chloroplast thylakoid membrane. Functionally, essential for the assembly of the photosystem I (PSI) complex. May act as a chaperone-like factor to guide the assembly of the PSI subunits. The polypeptide is Photosystem I assembly protein Ycf3 (Nephroselmis olivacea (Green alga)).